We begin with the raw amino-acid sequence, 46 residues long: Homeobox protein Hox-D4 (46 aa).

A DNA-binding region (homeobox) is located at residues 1–46; it reads VNSNYTGGEPKRSRTAYTRQQVLELEKEFLFNRYLTRRRRIQHTLT.

Belongs to the Antp homeobox family. Deformed subfamily. In terms of assembly, forms a DNA-binding heterodimer with transcription factor PBX1.

The protein localises to the nucleus. Sequence-specific transcription factor which is part of a developmental regulatory system that provides cells with specific positional identities on the anterior-posterior axis. The protein is Homeobox protein Hox-D4 (HOXD4) of Ovis aries (Sheep).